The primary structure comprises 102 residues: NADH-quinone oxidoreductase subunit K (102 aa).

3 helical membrane passes run 6–26 (LEHG…GLMV), 30–50 (ILFV…AFIV), and 62–82 (VMFI…LAIL).

Belongs to the complex I subunit 4L family. NDH-1 is composed of 13 different subunits. Subunits NuoA, H, J, K, L, M, N constitute the membrane sector of the complex.

The protein localises to the cell inner membrane. The catalysed reaction is a quinone + NADH + 5 H(+)(in) = a quinol + NAD(+) + 4 H(+)(out). Functionally, NDH-1 shuttles electrons from NADH, via FMN and iron-sulfur (Fe-S) centers, to quinones in the respiratory chain. The immediate electron acceptor for the enzyme in this species is believed to be ubiquinone. Couples the redox reaction to proton translocation (for every two electrons transferred, four hydrogen ions are translocated across the cytoplasmic membrane), and thus conserves the redox energy in a proton gradient. This is NADH-quinone oxidoreductase subunit K from Pseudomonas fluorescens (strain SBW25).